Consider the following 120-residue polypeptide: Chaperonin GroEL (120 aa).

23–27 is an ATP binding site; that stretch reads DGTTT.

The protein belongs to the chaperonin (HSP60) family. As to quaternary structure, forms a cylinder of 14 subunits composed of two heptameric rings stacked back-to-back. Interacts with the co-chaperonin GroES.

The protein resides in the cytoplasm. The enzyme catalyses ATP + H2O + a folded polypeptide = ADP + phosphate + an unfolded polypeptide.. In terms of biological role, together with its co-chaperonin GroES, plays an essential role in assisting protein folding. The GroEL-GroES system forms a nano-cage that allows encapsulation of the non-native substrate proteins and provides a physical environment optimized to promote and accelerate protein folding. The polypeptide is Chaperonin GroEL (Mycolicibacterium fallax (Mycobacterium fallax)).